The chain runs to 163 residues: 2-amino-4-hydroxy-6-hydroxymethyldihydropteridine pyrophosphokinase (163 aa).

This sequence belongs to the HPPK family.

It carries out the reaction 6-hydroxymethyl-7,8-dihydropterin + ATP = (7,8-dihydropterin-6-yl)methyl diphosphate + AMP + H(+). The protein operates within cofactor biosynthesis; tetrahydrofolate biosynthesis; 2-amino-4-hydroxy-6-hydroxymethyl-7,8-dihydropteridine diphosphate from 7,8-dihydroneopterin triphosphate: step 4/4. Its function is as follows. Catalyzes the transfer of pyrophosphate from adenosine triphosphate (ATP) to 6-hydroxymethyl-7,8-dihydropterin, an enzymatic step in folate biosynthesis pathway. This Helicobacter pylori (strain ATCC 700392 / 26695) (Campylobacter pylori) protein is 2-amino-4-hydroxy-6-hydroxymethyldihydropteridine pyrophosphokinase (folK).